The chain runs to 49 residues: Large ribosomal subunit protein bL33 (49 aa).

The protein belongs to the bacterial ribosomal protein bL33 family.

This is Large ribosomal subunit protein bL33 from Desulfitobacterium hafniense (strain Y51).